We begin with the raw amino-acid sequence, 254 residues long: NAD-dependent protein deacetylase 1 (254 aa).

Residues 3–252 (VDFTTDELDE…PKLLDRLRGM (250 aa)) enclose the Deacetylase sirtuin-type domain. Residues Ala29, Thr33, Phe40, Arg41, Gln105, Val107, Asp108, and His123 each contribute to the NAD(+) site. Position 40 (Phe40) interacts with nicotinamide. Nicotinamide is bound by residues Val107 and Asp108. Residue His123 is the Proton acceptor of the active site. The Zn(2+) site is built by Cys131, Cys134, Cys154, and Cys157. NAD(+) is bound by residues Thr195, Ser196, and Asn220.

This sequence belongs to the sirtuin family. Class U subfamily. The cofactor is Zn(2+).

It is found in the cytoplasm. The catalysed reaction is N(6)-acetyl-L-lysyl-[protein] + NAD(+) + H2O = 2''-O-acetyl-ADP-D-ribose + nicotinamide + L-lysyl-[protein]. Its function is as follows. NAD-dependent protein deacetylase which modulates the activities of several enzymes which are inactive in their acetylated form. Deacetylates the N-terminal lysine residue of Alba, the major archaeal chromatin protein and that, in turn, increases Alba's DNA binding affinity, thereby repressing transcription. The polypeptide is NAD-dependent protein deacetylase 1 (Pyrobaculum aerophilum (strain ATCC 51768 / DSM 7523 / JCM 9630 / CIP 104966 / NBRC 100827 / IM2)).